The following is a 139-amino-acid chain: Large ribosomal subunit protein uL16 (139 aa).

A compositionally biased stretch (basic residues) spans 1–20 (MLMPRRVKHRKQHHPTRRGA). A disordered region spans residues 1–24 (MLMPRRVKHRKQHHPTRRGAAKGG).

The protein belongs to the universal ribosomal protein uL16 family. As to quaternary structure, part of the 50S ribosomal subunit.

Its function is as follows. Binds 23S rRNA and is also seen to make contacts with the A and possibly P site tRNAs. This is Large ribosomal subunit protein uL16 from Nocardioides sp. (strain ATCC BAA-499 / JS614).